The following is a 539-amino-acid chain: Tyrosinase (539 aa).

Cu cation contacts are provided by histidine 63, histidine 84, histidine 93, histidine 290, histidine 294, and histidine 333. The segment at residues 82–84 is a cross-link (2'-(S-cysteinyl)-histidine (Cys-His)); it reads CHH.

It belongs to the tyrosinase family. Homotetramer. Cu(2+) is required as a cofactor. Post-translationally, the N-terminus is blocked.

It catalyses the reaction 2 L-dopa + O2 = 2 L-dopaquinone + 2 H2O. The enzyme catalyses L-tyrosine + O2 = L-dopaquinone + H2O. Its activity is regulated as follows. Activated by acidifying treatment at pH 3.0. This is a copper-containing oxidase that functions in the formation of pigments such as melanins and other polyphenolic compounds. This is Tyrosinase (melO) from Aspergillus oryzae (strain ATCC 42149 / RIB 40) (Yellow koji mold).